The sequence spans 458 residues: Flavohemoprotein (458 aa).

A Globin domain is found at 2-158 (PLSEDTIKAV…LAHLFVRREE (157 aa)). Residue histidine 107 participates in heme b binding. Residues tyrosine 117 and glutamate 157 each act as charge relay system in the active site. Residues 169–457 (GGWRQTRSFR…FEMFGPFKPL (289 aa)) form a reductase region. Residues 172–279 (RQTRSFRVEE…APPYGDFFLE (108 aa)) enclose the FAD-binding FR-type domain. Residues tyrosine 211 and 228 to 231 (RQYS) contribute to the FAD site. 320 to 325 (GIGQTP) is a binding site for NADP(+). 450–453 (MFGP) is a binding site for FAD.

The protein belongs to the globin family. Two-domain flavohemoproteins subfamily. It in the C-terminal section; belongs to the flavoprotein pyridine nucleotide cytochrome reductase family. In terms of assembly, monomer. Heme b serves as cofactor. It depends on FAD as a cofactor.

It catalyses the reaction 2 nitric oxide + NADPH + 2 O2 = 2 nitrate + NADP(+) + H(+). The enzyme catalyses 2 nitric oxide + NADH + 2 O2 = 2 nitrate + NAD(+) + H(+). Flavohemoprotein involved in nitric oxide (NO) detoxification in an aerobic process, termed nitric oxide dioxygenase (NOD) reaction that utilizes O(2) and NAD(P)H to convert NO to nitrate, which protects the protozoan parasite from various noxious nitrogen compounds. Therefore, plays a central role in the inducible response to nitrosative stress. May also be involved in O(2) detoxification. The protein is Flavohemoprotein (hmpA) of Giardia intestinalis (strain ATCC 50581 / GS clone H7) (Giardia lamblia).